The sequence spans 206 residues: MSKKPAGKNSNRIVAAVCLAFFTGMIGMAYAAVPLYKMFCQATGYGGTTQRVEKQYAGRVLDREITVRFDANIAGVPWEFQPVQRSMTMKIGETVQAHYQATNKFDRPVTGRATFNVQPELAGPYFNKVECFCFTDTSLKPGETVDMPVLFYVDPDIVNVPELKDVKTITLSYTMFPVEKNKPVASSEPVQGTSKIISDTEANLGG.

The Cytoplasmic portion of the chain corresponds to 1–12 (MSKKPAGKNSNR). The chain crosses the membrane as a helical; Signal-anchor for type II membrane protein span at residues 13-35 (IVAAVCLAFFTGMIGMAYAAVPL). Over 36 to 206 (YKMFCQATGY…ISDTEANLGG (171 aa)) the chain is Periplasmic. The segment at 184 to 206 (VASSEPVQGTSKIISDTEANLGG) is disordered. Over residues 188–206 (EPVQGTSKIISDTEANLGG) the composition is skewed to polar residues.

This sequence belongs to the COX11/CtaG family.

Its subcellular location is the cell inner membrane. Functionally, exerts its effect at some terminal stage of cytochrome c oxidase synthesis, probably by being involved in the insertion of the copper B into subunit I. This Mesorhizobium japonicum (strain LMG 29417 / CECT 9101 / MAFF 303099) (Mesorhizobium loti (strain MAFF 303099)) protein is Cytochrome c oxidase assembly protein CtaG.